The sequence spans 417 residues: Imidazolonepropionase (417 aa).

Residues histidine 80 and histidine 82 each coordinate Fe(3+). Residues histidine 80 and histidine 82 each coordinate Zn(2+). 4-imidazolone-5-propanoate contacts are provided by arginine 89, tyrosine 152, and histidine 187. Tyrosine 152 is a binding site for N-formimidoyl-L-glutamate. Position 252 (histidine 252) interacts with Fe(3+). Histidine 252 provides a ligand contact to Zn(2+). Glutamate 255 is a 4-imidazolone-5-propanoate binding site. Position 326 (aspartate 326) interacts with Fe(3+). Aspartate 326 is a binding site for Zn(2+). 2 residues coordinate N-formimidoyl-L-glutamate: asparagine 328 and glycine 330. Position 331 (serine 331) interacts with 4-imidazolone-5-propanoate.

Belongs to the metallo-dependent hydrolases superfamily. HutI family. Zn(2+) is required as a cofactor. It depends on Fe(3+) as a cofactor.

Its subcellular location is the cytoplasm. The enzyme catalyses 4-imidazolone-5-propanoate + H2O = N-formimidoyl-L-glutamate. It participates in amino-acid degradation; L-histidine degradation into L-glutamate; N-formimidoyl-L-glutamate from L-histidine: step 3/3. In terms of biological role, catalyzes the hydrolytic cleavage of the carbon-nitrogen bond in imidazolone-5-propanoate to yield N-formimidoyl-L-glutamate. It is the third step in the universal histidine degradation pathway. The chain is Imidazolonepropionase from Bacteroides fragilis (strain YCH46).